Reading from the N-terminus, the 375-residue chain is Actin (375 aa).

The protein belongs to the actin family.

The protein resides in the cytoplasm. It is found in the cytoskeleton. It catalyses the reaction ATP + H2O = ADP + phosphate + H(+). Functionally, actins are highly conserved proteins that are involved in various types of cell motility and are ubiquitously expressed in all eukaryotic cells. The chain is Actin from Sterkiella cavicola (Ciliate).